The sequence spans 105 residues: Mitomycin resistance protein McrB (105 aa).

In terms of biological role, involved in mitomycin resistance. May operate with McrA or may be a type of transcriptional activator protein. This Streptomyces lavendulae protein is Mitomycin resistance protein McrB (mcrB).